A 297-amino-acid polypeptide reads, in one-letter code: MAQLSVEQFLNEQKQAVETALSRYIERLEGPAKLKKAMAYSLEAGGKRIRPLLLLSTVRALGKDPAVGLPVACAIEMIHTYSLIHDDLPSMDNDDLRRGKPTNHKVFGEAMAILAGDGLLTYAFQLITEIDDERIPPSVRLRLIERLAKAAGPEGMVAGQAADMEGEGKTLTLSELEYIHRHKTGKMLQYSVHAGALIGGADARQTRELDEFAAHLGLAFQIRDDILDIEGAEEKIGKPVGSDQSNNKATYPALLSLAGAKEKLAFHIEAAQRHLRNADVDGAALAYICELVAARDH.

Residues lysine 47, arginine 50, and histidine 79 each contribute to the isopentenyl diphosphate site. 2 residues coordinate Mg(2+): aspartate 86 and aspartate 92. Arginine 97 contributes to the (2E)-geranyl diphosphate binding site. Arginine 98 serves as a coordination point for isopentenyl diphosphate. (2E)-geranyl diphosphate-binding residues include lysine 183, threonine 184, glutamine 221, and lysine 238.

The protein belongs to the FPP/GGPP synthase family. It depends on Mg(2+) as a cofactor.

The protein resides in the cytoplasm. It carries out the reaction isopentenyl diphosphate + (2E)-geranyl diphosphate = (2E,6E)-farnesyl diphosphate + diphosphate. The polypeptide is Farnesyl diphosphate synthase (Geobacillus stearothermophilus (Bacillus stearothermophilus)).